The sequence spans 765 residues: Zinc metalloproteinase nas-37 (765 aa).

Residues 1–22 (MKSQACLKVCLALIGLVSIVST) form the signal peptide. Residues 23–114 (AYIANDVVSD…SESNSPRSRR (92 aa)) constitute a propeptide that is removed on maturation. The Peptidase M12A domain maps to 115–308 (QAHPDPRNFW…AKMINTRYCS (194 aa)). Asn126 carries N-linked (GlcNAc...) asparagine glycosylation. 6 cysteine pairs are disulfide-bonded: Cys156/Cys307, Cys177/Cys196, Cys311/Cys331, Cys333/Cys342, Cys350/Cys374, and Cys400/Cys420. A Zn(2+)-binding site is contributed by His204. Glu205 is an active-site residue. Residues His208 and His214 each coordinate Zn(2+). In terms of domain architecture, EGF-like spans 303–343 (NTRYCSNVCQRSLPCLNEGYTDPNNCGRCRCPSGYGGTYCE). The 109-residue stretch at 350–458 (CGGSLTASSS…RGFTLKYRAI (109 aa)) folds into the CUB domain. The segment at 513-573 (KYSSEELYDP…TRPTPTTTVA (61 aa)) is disordered. 2 stretches are compositionally biased toward low complexity: residues 526–545 (LSPS…DASP) and 562–573 (ALTRPTPTTTVA). A TSP type-1 domain is found at 576 to 627 (TASWSAWGEWSACSQPCGGCGTKTRVRACYGGNQVCPGSNLDRESCNAHACA). 3 cysteine pairs are disulfide-bonded: Cys588–Cys621, Cys592–Cys626, and Cys604–Cys611.

Zn(2+) serves as cofactor. As to expression, expressed in hypodermal cells. Not expressed in the seam cells in L1 to L3 larvae, but it is present in seam cells of L4 larvae. Also expressed in attachment points of the cuticle at the anterior end of larvae, in the arcade cells in the mouth, the anterior pharynx, the amphid socket cells, and in the rectal epithelial cells at the posterior end of the larvae (at protein level).

Its subcellular location is the secreted. Metalloprotease. Plays an essential role in molting, a process during larval stages in which a new cuticle is formed and the old cuticle is shed. Required during ecdysis, the opening of the cuticle to allow the worm to escape. The sequence is that of Zinc metalloproteinase nas-37 (nas-37) from Caenorhabditis elegans.